A 139-amino-acid polypeptide reads, in one-letter code: Ribulose bisphosphate carboxylase small subunit (139 aa).

Belongs to the RuBisCO small chain family. Heterohexadecamer of 8 large and 8 small subunits.

Its subcellular location is the plastid. The protein localises to the chloroplast. Its function is as follows. RuBisCO catalyzes two reactions: the carboxylation of D-ribulose 1,5-bisphosphate, the primary event in carbon dioxide fixation, as well as the oxidative fragmentation of the pentose substrate in the photorespiration process. Both reactions occur simultaneously and in competition at the same active site. Although the small subunit is not catalytic it is essential for maximal activity. This chain is Ribulose bisphosphate carboxylase small subunit, found in Detonula confervacea (Marine diatom).